The sequence spans 611 residues: Glutamine--fructose-6-phosphate aminotransferase [isomerizing] (611 aa).

Residue Cys2 is the Nucleophile; for GATase activity of the active site. In terms of domain architecture, Glutamine amidotransferase type-2 spans 2-219 (CGIVGAVAER…EGDIAEIRRD (218 aa)). 2 SIS domains span residues 287-427 (AAEL…VKGS) and 460-601 (VAEL…VDQP). The active-site For Fru-6P isomerization activity is Lys606.

Homodimer.

The protein resides in the cytoplasm. It carries out the reaction D-fructose 6-phosphate + L-glutamine = D-glucosamine 6-phosphate + L-glutamate. In terms of biological role, catalyzes the first step in hexosamine metabolism, converting fructose-6P into glucosamine-6P using glutamine as a nitrogen source. The polypeptide is Glutamine--fructose-6-phosphate aminotransferase [isomerizing] (Pseudomonas syringae pv. tomato (strain ATCC BAA-871 / DC3000)).